The chain runs to 484 residues: UDP-N-acetylmuramate--L-alanine ligase (484 aa).

126 to 132 contributes to the ATP binding site; the sequence is GTHGKTT.

Belongs to the MurCDEF family.

Its subcellular location is the cytoplasm. The catalysed reaction is UDP-N-acetyl-alpha-D-muramate + L-alanine + ATP = UDP-N-acetyl-alpha-D-muramoyl-L-alanine + ADP + phosphate + H(+). It functions in the pathway cell wall biogenesis; peptidoglycan biosynthesis. Cell wall formation. In Aeromonas hydrophila subsp. hydrophila (strain ATCC 7966 / DSM 30187 / BCRC 13018 / CCUG 14551 / JCM 1027 / KCTC 2358 / NCIMB 9240 / NCTC 8049), this protein is UDP-N-acetylmuramate--L-alanine ligase.